We begin with the raw amino-acid sequence, 157 residues long: Protein Smg homolog (157 aa).

The protein belongs to the Smg family.

This is Protein Smg homolog from Idiomarina loihiensis (strain ATCC BAA-735 / DSM 15497 / L2-TR).